The following is a 56-amino-acid chain: Ovomucoid (56 aa).

Positions 6-56 (VDCSEYPKPACTLEHRPLCGSDNKTYGNKCNFCNAVVESNGTLTLSHFGKC) constitute a Kazal-like domain. 3 disulfide bridges follow: Cys8-Cys38, Cys16-Cys35, and Cys24-Cys56. Asn45 carries N-linked (GlcNAc...) asparagine glycosylation.

The protein resides in the secreted. The polypeptide is Ovomucoid (Pavo cristatus (Indian peafowl)).